The chain runs to 35 residues: Beta-amanitin proprotein (35 aa).

The propeptide occupies 1-10 (MSDINATRLP). Residues 11-18 (IWGIGCDP) constitute a cross-link (cyclopeptide (Ile-Pro)). A cross-link (2'-cysteinyl-6'-hydroxytryptophan sulfoxide (Trp-Cys)) is located at residues 12 to 16 (WGIGC). Positions 19–35 (CVGDDVTALLTRGEALC) are excised as a propeptide.

Belongs to the MSDIN fungal toxin family. In terms of processing, processed by the macrocyclase-peptidase enzyme POPB to yield a toxic cyclic octapeptide. POPB first removes 10 residues from the N-terminus. Conformational trapping of the remaining peptide forces the enzyme to release this intermediate rather than proceed to macrocyclization. The enzyme rebinds the remaining peptide in a different conformation and catalyzes macrocyclization of the N-terminal 8 residues. In terms of tissue distribution, expressed in basidiocarps.

Its function is as follows. Toxin belonging to the bicyclic octapeptides amatoxins that acts by binding non-competitively to RNA polymerase II and greatly slowing the elongation of transcripts from target promoters. The sequence is that of Beta-amanitin proprotein from Amanita exitialis (Guangzhou destroying angel).